The chain runs to 292 residues: Zinc finger protein OZF (292 aa).

10 consecutive C2H2-type zinc fingers follow at residues Phe-16–His-38, Phe-44–His-66, Phe-72–His-94, Phe-100–His-122, Phe-128–His-150, Phe-156–His-178, Tyr-184–His-206, Tyr-212–His-234, Tyr-240–His-262, and Tyr-268–His-290. Glycyl lysine isopeptide (Lys-Gly) (interchain with G-Cter in SUMO2) cross-links involve residues Lys-28, Lys-51, and Lys-56. Glycyl lysine isopeptide (Lys-Gly) (interchain with G-Cter in SUMO) cross-links involve residues Lys-157 and Lys-169. Residue Lys-173 forms a Glycyl lysine isopeptide (Lys-Gly) (interchain with G-Cter in SUMO2) linkage. An interaction with TERF2IP region spans residues Tyr-212–His-292.

The protein belongs to the krueppel C2H2-type zinc-finger protein family. Binds DNA. Interacts with SUMO conjugating enzyme UBC9/UBE2I. Interacts with the telomeric protein TERF2IP. As to expression, expressed in heart, brain, liver, lung, skeletal muscle and kidney, and at much lower level in spleen and testicle. Expressed in lactating mammary gland.

It is found in the nucleus. The sequence is that of Zinc finger protein OZF (Znf146) from Mus musculus (Mouse).